Reading from the N-terminus, the 584-residue chain is Arginine--tRNA ligase (584 aa).

The short motif at 127 to 137 (PNTNKPLHVGH) is the 'HIGH' region element.

The protein belongs to the class-I aminoacyl-tRNA synthetase family. Monomer.

The protein localises to the cytoplasm. The catalysed reaction is tRNA(Arg) + L-arginine + ATP = L-arginyl-tRNA(Arg) + AMP + diphosphate. In Borrelia turicatae (strain 91E135), this protein is Arginine--tRNA ligase.